A 482-amino-acid chain; its full sequence is tRNA sulfurtransferase (482 aa).

Positions 61-165 (AEVLEILTHT…GDKLNQVLAR (105 aa)) constitute a THUMP domain. Residues 183–184 (LI), K265, G287, and Q296 each bind ATP. Residues C344 and C456 are joined by a disulfide bond. One can recognise a Rhodanese domain in the interval 404-482 (VEEHAVVLDI…GFNNVKVYRP (79 aa)). Residue C456 is the Cysteine persulfide intermediate of the active site.

The protein belongs to the ThiI family.

It is found in the cytoplasm. The enzyme catalyses [ThiI sulfur-carrier protein]-S-sulfanyl-L-cysteine + a uridine in tRNA + 2 reduced [2Fe-2S]-[ferredoxin] + ATP + H(+) = [ThiI sulfur-carrier protein]-L-cysteine + a 4-thiouridine in tRNA + 2 oxidized [2Fe-2S]-[ferredoxin] + AMP + diphosphate. It catalyses the reaction [ThiS sulfur-carrier protein]-C-terminal Gly-Gly-AMP + S-sulfanyl-L-cysteinyl-[cysteine desulfurase] + AH2 = [ThiS sulfur-carrier protein]-C-terminal-Gly-aminoethanethioate + L-cysteinyl-[cysteine desulfurase] + A + AMP + 2 H(+). Its pathway is cofactor biosynthesis; thiamine diphosphate biosynthesis. Catalyzes the ATP-dependent transfer of a sulfur to tRNA to produce 4-thiouridine in position 8 of tRNAs, which functions as a near-UV photosensor. Also catalyzes the transfer of sulfur to the sulfur carrier protein ThiS, forming ThiS-thiocarboxylate. This is a step in the synthesis of thiazole, in the thiamine biosynthesis pathway. The sulfur is donated as persulfide by IscS. The sequence is that of tRNA sulfurtransferase from Vibrio parahaemolyticus serotype O3:K6 (strain RIMD 2210633).